A 1045-amino-acid polypeptide reads, in one-letter code: 3-hydroxy-3-methylglutaryl-coenzyme A reductase 2 (1045 aa).

Topologically, residues 1–24 (MSLPLKTIVHLVKPFACTARFSAR) are cytoplasmic. The chain crosses the membrane as a helical span at residues 25–45 (YPIHVIVVAVLLSAAAYLSVT). The Lumenal segment spans residues 46–186 (QSYLNEWKLD…FSNKTSEFDQ (141 aa)). N-linked (GlcNAc...) asparagine glycans are attached at residues asparagine 115, asparagine 150, asparagine 158, and asparagine 179. Residues 187–207 (FDLFIILAAYLTLFYTLCCLF) form a helical membrane-spanning segment. The 169-residue stretch at 188–356 (DLFIILAAYL…ATFYSAILSM (169 aa)) folds into the SSD domain. At 208-216 (NDMRKIGSK) the chain is on the cytoplasmic side. The chain crosses the membrane as a helical span at residues 217–237 (FWLSFSALSNSACALYLSLYT). Topologically, residues 238–243 (THSLLK) are lumenal. Residues 244 to 264 (KPASLLSLVIGLPFIVVIIGF) traverse the membrane as a helical segment. The Cytoplasmic portion of the chain corresponds to 265–301 (KHKVRLAAFSLQKFHRISIDKKITVSNIIYEAMFQEG). The chain crosses the membrane as a helical span at residues 302-322 (AYLIRDYLFYISSFIGCAIYA). The Lumenal portion of the chain corresponds to 323–324 (RH). A helical transmembrane segment spans residues 325 to 345 (LPGLVNFCILSTFMLVFDLLL). The Cytoplasmic segment spans residues 346–402 (SATFYSAILSMKLEINIIHRSTVIRQTLEEDGVVPTTADIIYKDETASEPHFLRSNV). Residues 403–423 (AIILGKASVIGLLLLINLYVF) form a helical membrane-spanning segment. The Lumenal portion of the chain corresponds to 424–497 (TDKLNATILN…DSVSNAIRDQ (74 aa)). 2 N-linked (GlcNAc...) asparagine glycosylation sites follow: asparagine 428 and asparagine 455. Residues 498 to 518 (FISKLLFFAFAVSISINVYLL) form a helical membrane-spanning segment. Topologically, residues 519-1045 (NAAKIHTGYM…GPPCKTSALL (527 aa)) are cytoplasmic. Threonine 565 carries the phosphothreonine modification. The Charge relay system role is filled by glutamate 710. 716–722 (SAMRGCK) lines the CoA pocket. Residues 777 to 779 (SRF) and 804 to 812 (DAMGMNMIS) contribute to the NADP(+) site. Lysine 844 acts as the Charge relay system in catalysis. 873–875 (VLK) is a CoA binding site. Aspartate 920 serves as the catalytic Charge relay system. 1015–1016 (SH) serves as a coordination point for CoA. The Proton donor role is filled by histidine 1016. The disordered stretch occupies residues 1018–1045 (THNRKTNKANELPQPSNKGPPCKTSALL). 1020–1021 (NR) provides a ligand contact to NADP(+).

It belongs to the HMG-CoA reductase family.

The protein localises to the endoplasmic reticulum membrane. It is found in the nucleus envelope. It carries out the reaction (R)-mevalonate + 2 NADP(+) + CoA = (3S)-3-hydroxy-3-methylglutaryl-CoA + 2 NADPH + 2 H(+). It participates in metabolic intermediate biosynthesis; (R)-mevalonate biosynthesis; (R)-mevalonate from acetyl-CoA: step 3/3. Its function is as follows. HMG-CoA reductase; part of the first module of ergosterol biosynthesis pathway constitutes by the early steps of the pathway, conserved across all eukaryotes, and which results in the formation of mevalonate from acetyl-coenzyme A (acetyl-CoA). HMG1 and HMG2 catalyze the reduction of hydroxymethylglutaryl-CoA (HMG-CoA) to mevalonate that is the rate-limiting step within the first mosule. The first module starts with the action of the cytosolic acetyl-CoA acetyltransferase ERG10 that catalyzes the formation of acetoacetyl-CoA. The hydroxymethylglutaryl-CoA synthase ERG13 then condenses acetyl-CoA with acetoacetyl-CoA to form HMG-CoA. The rate-limiting step of the early module is the reduction to mevalonate by the 3-hydroxy-3-methylglutaryl-coenzyme A (HMG-CoA) reductases HMG1 and HMG2 which are derived from a single ancestral HMGR gene by gene duplication. This is 3-hydroxy-3-methylglutaryl-coenzyme A reductase 2 from Saccharomyces cerevisiae (strain ATCC 204508 / S288c) (Baker's yeast).